A 342-amino-acid polypeptide reads, in one-letter code: Serpentine receptor class delta-33 (342 aa).

A run of 7 helical transmembrane segments spans residues 26-46, 62-82, 112-132, 148-168, 205-225, 261-281, and 287-307; these read IFVI…LLLL, IFLA…VTSM, YVGI…SMIY, IILC…CSNI, LIIL…VMYW, IIPL…QLGF, and YSYF…VVTI.

It belongs to the nematode receptor-like protein srd family.

Its subcellular location is the membrane. The chain is Serpentine receptor class delta-33 (srd-33) from Caenorhabditis elegans.